The primary structure comprises 192 residues: Rhomboid protease GlpG (192 aa).

At 1–10 (MKNFLAQQGK) the chain is on the cytoplasmic side. A helical membrane pass occupies residues 11 to 31 (ITLILTALCVLIYLAQQLGFE). Residues 32 to 57 (DDIMYLMHYPAYEEQDSEVWRYISHT) are Periplasmic-facing. The helical transmembrane segment at 58-78 (LVHLSNLHILFNLSWFFIFGG) threads the bilayer. Residues 79–82 (MIER) are Cytoplasmic-facing. Residues 83–103 (TFGSVKLLMLYVVASAITGYV) traverse the membrane as a helical segment. At 104–107 (QNYV) the chain is on the periplasmic side. The chain crosses the membrane as a helical span at residues 108-128 (SGPAFFGLSGVVYAVLGYVFI). Ser-116 acts as the Nucleophile in catalysis. The Cytoplasmic segment spans residues 129 to 141 (RDKLNHHLFDLPE). The chain crosses the membrane as a helical span at residues 142-162 (GFFTMLLVGIALGFISPLFGV). Residue Glu-163 is a topological domain, periplasmic. Residues 164–184 (MGNAAHISGLIVGLIWGFIDS) form a helical membrane-spanning segment. His-169 is a catalytic residue. At 185-192 (KLRKNSLE) the chain is on the cytoplasmic side.

It belongs to the peptidase S54 family.

It localises to the cell inner membrane. It catalyses the reaction Cleaves type-1 transmembrane domains using a catalytic dyad composed of serine and histidine that are contributed by different transmembrane domains.. Functionally, rhomboid-type serine protease that catalyzes intramembrane proteolysis. This Haemophilus influenzae (strain ATCC 51907 / DSM 11121 / KW20 / Rd) protein is Rhomboid protease GlpG (glpG).